A 155-amino-acid chain; its full sequence is Ribosome maturation factor RimP (155 aa).

This sequence belongs to the RimP family.

Its subcellular location is the cytoplasm. Functionally, required for maturation of 30S ribosomal subunits. The sequence is that of Ribosome maturation factor RimP from Phocaeicola vulgatus (strain ATCC 8482 / DSM 1447 / JCM 5826 / CCUG 4940 / NBRC 14291 / NCTC 11154) (Bacteroides vulgatus).